The primary structure comprises 198 residues: Recombination protein RecR (198 aa).

Residues Cys57–Cys72 form a C4-type zinc finger. A Toprim domain is found at Thr80–Pro175.

It belongs to the RecR family.

Its function is as follows. May play a role in DNA repair. It seems to be involved in an RecBC-independent recombinational process of DNA repair. It may act with RecF and RecO. The polypeptide is Recombination protein RecR (Geobacillus kaustophilus (strain HTA426)).